We begin with the raw amino-acid sequence, 424 residues long: Endo-beta-1,4-galactanase (424 aa).

A signal peptide spans 1 to 26 (MKNVLAVFVVLIFVLGAFGTSGPAEA). 142–145 (DPAK) is a substrate binding site. Residue Glu190 is the Proton donor of the active site. Residues 229-230 (TN) and His263 contribute to the substrate site. The Nucleophile role is filled by Glu288. Substrate is bound at residue Thr292. The Ca(2+) site is built by Asp297, Asp299, His301, and Asn303. Residues Lys307 and Asp384 each coordinate substrate. Positions 392 and 395 each coordinate Ca(2+).

This sequence belongs to the glycosyl hydrolase 53 family. Ca(2+) is required as a cofactor.

It carries out the reaction The enzyme specifically hydrolyzes (1-&gt;4)-beta-D-galactosidic linkages in type I arabinogalactans.. Involved in galactan degradation. Degrades arabinose-free galactan to galactooligosaccharides, producing galactotetraose as the main product along with galactotriose, galactobiose, and galactose. May hydrolyze the beta-1,4-galactan linkages of the galactan portion of arabinogalactan type I, a pectic plant polysaccharide from which most of the arabinose has been removed. This is Endo-beta-1,4-galactanase (ganB) from Bacillus licheniformis (strain ATCC 14580 / DSM 13 / JCM 2505 / CCUG 7422 / NBRC 12200 / NCIMB 9375 / NCTC 10341 / NRRL NRS-1264 / Gibson 46).